A 69-amino-acid polypeptide reads, in one-letter code: Antimicrobial peptide Eval36 (69 aa).

The first 23 residues, 1–23 (MKAQFAILVISMMLLQLIVQTES), serve as a signal peptide directing secretion. L37 is subject to Leucine amide. Residues 38–69 (GKRGLRNLDDFQDFLDSDTSDADLRMLRDMFR) constitute a propeptide that is removed on maturation.

Belongs to the non-disulfide-bridged peptide (NDBP) superfamily. Short antimicrobial peptide (group 4) family. As to expression, expressed by the venom gland.

It is found in the secreted. In terms of biological role, probable antimicrobial peptide. Shows low inhibitory activity against herpes simplex virus type 1 (HSV-1). This Euscorpiops validus (Scorpion) protein is Antimicrobial peptide Eval36.